A 386-amino-acid chain; its full sequence is MADNSFSDGVPSDSLEAAKNASNTEKLTDQVMQNPQVLAALQERLDNVSHTPSSYIETLPKAVKRRINALKQLQVKCAHIEAKFYEEVHDLERKYAALYQPLFDKRREFITGDVEPTDAESEWHSETEEEDKLAGDMKNKAVIAEKEAAAAEEPAPRGIPEFWFTIFRNVDMLSELVQEYDEPILKHLQDIKVKFSDPGQPMSFVLEFHFEPDDYFTNPVLTKTYKMKSEPDKADPFSFEGPEIVDCDGCTIDWKKGKNVTVKTIKKKQKHKGRGTVRTITKQVPNDSFFNFFSPLRASGDGESLDEDSEFTLASDFEIGHFFRERIVPRAVLYFTGEAIEDDDNFEEGEEGEEEELEGDEEAEDDDDAEINPKKEPSQPSECKQQ.

The tract at residues 1-29 (MADNSFSDGVPSDSLEAAKNASNTEKLTD) is disordered. Alanine 2 carries the post-translational modification N-acetylalanine. 3 positions are modified to phosphoserine: serine 5, serine 7, and serine 12. Residues 20–29 (NASNTEKLTD) are compositionally biased toward polar residues. At serine 49 the chain carries Phosphoserine. Threonine 51 is subject to Phosphothreonine. Serine 53 and serine 54 each carry phosphoserine. Threonine 58 carries the post-translational modification Phosphothreonine. Residue lysine 105 is modified to N6-acetyllysine. Phosphoserine is present on serine 125. Lysine 146 is subject to N6-acetyllysine. The Nuclear localization signal motif lies at 265 to 271 (IKKKQKH). Phosphoserine is present on serine 304. The span at 339–370 (AIEDDDNFEEGEEGEEEELEGDEEAEDDDDAE) shows a compositional bias: acidic residues. The tract at residues 339-386 (AIEDDDNFEEGEEGEEEELEGDEEAEDDDDAEINPKKEPSQPSECKQQ) is disordered.

It belongs to the nucleosome assembly protein (NAP) family. In terms of assembly, interacts with core (H2A, H2B, H3, H4) and linker (H1) histones. Post-translationally, polyglutamylated and polyglycylated. These 2 modifications occur exclusively on glutamate residues and result in either polyglutamate or polyglycine chains on the gamma-carboxyl group. Both modifications can coexist on the same protein on adjacent residues, and lowering polyglycylation levels increases polyglutamylation, and reciprocally. Polyglutamylated by TTLL4. In terms of processing, phosphorylated at the G0/G1 boundary but it is not phosphorylated in S-phase. Phosphorylated protein remains in the cytoplasm in a complex with histones during the G0/G1 transition, whereas dephosphorylation triggers its transport into the nucleus at the G1/S-boundary.

Its subcellular location is the nucleus. The protein resides in the cytoplasm. Its function is as follows. Acts as a histone chaperone in nucleosome assembly. The sequence is that of Nucleosome assembly protein 1-like 4 (NAP1L4) from Bos taurus (Bovine).